A 148-amino-acid polypeptide reads, in one-letter code: Large-conductance mechanosensitive channel (148 aa).

The next 2 membrane-spanning stretches (helical) occupy residues 9–29 and 79–99; these read AFAV…GAAF and IQTV…VKAI.

The protein belongs to the MscL family. Homopentamer.

It is found in the cell inner membrane. Its function is as follows. Channel that opens in response to stretch forces in the membrane lipid bilayer. May participate in the regulation of osmotic pressure changes within the cell. The polypeptide is Large-conductance mechanosensitive channel (Pseudomonas syringae pv. tomato (strain ATCC BAA-871 / DC3000)).